The chain runs to 1025 residues: Transcription factor tau 131 kDa subunit (1025 aa).

A compositionally biased stretch (basic and acidic residues) spans 1–26; it reads MAAGKLKKEQQNQSAERESADTGKVN. Positions 1-71 are disordered; the sequence is MAAGKLKKEQ…EDEYNSERDS (71 aa). Acidic residues predominate over residues 46–65; the sequence is DEEYDDEDVPHDLQLSEDEY. 5 TPR repeats span residues 128 to 161, 162 to 195, 196 to 229, 230 to 263, and 264 to 297; these read VAQL…DARN, FAAY…NASD, WEFW…NPME, WESI…NPYD, and ANIL…NVER. The segment at 128 to 569 is sufficient to bind BDP1; the sequence is VAQLLSQANE…VDVVEMRKHQ (442 aa). Positions 309-334 are disordered; the sequence is LDSSDEESAAEGEDADEKEPLEQDED. S311 is subject to Phosphoserine. A compositionally biased stretch (acidic residues) spans 311-325; sequence SSDEESAAEGEDADE. 6 TPR repeats span residues 432-465, 467-501, 502-535, 536-569, 875-908, and 959-992; these read IDIR…TFSD, ADLY…EWRT, TDVF…EPDD, LDIR…RKHQ, PYLY…IPDD, and QEAD…YDDG.

In terms of assembly, component of the TFIIIC complex composed of TFC1, TFC3, TFC4, TFC6, TFC7 and TFC8. The subunits are organized in two globular domains, tauA and tauB, connected by a proteolysis-sensitive and flexible linker. Interacts with TFC1, TFC3, TFC6, TFIIIB subunits BRF1 and BDP1, and with RNA polymerase III subunit RPC10. Phosphorylated.

It localises to the nucleus. Its function is as follows. TFIIIC mediates tRNA and 5S RNA gene activation by binding to intragenic promoter elements. Upstream of the transcription start site, TFIIIC assembles the initiation complex TFIIIB-TFIIIC-tDNA, which is sufficient for RNA polymerase III recruitment and function. Part of the tauA domain of TFIIIC that binds boxA DNA promoter sites of tRNA and similar genes. TFC4 is the TFIIIB-assembling subunit of TFIIIC and essential for viability. The sequence is that of Transcription factor tau 131 kDa subunit (TFC4) from Saccharomyces cerevisiae (strain ATCC 204508 / S288c) (Baker's yeast).